We begin with the raw amino-acid sequence, 248 residues long: tRNA (guanine-N(1)-)-methyltransferase (248 aa).

S-adenosyl-L-methionine-binding positions include Gly-113 and 133–138 (IGDYVL). Positions 226-248 (ARPAQTIRAKGESQKTPKNKTDG) are disordered. Basic and acidic residues predominate over residues 234–248 (AKGESQKTPKNKTDG).

It belongs to the RNA methyltransferase TrmD family. Homodimer.

It localises to the cytoplasm. It carries out the reaction guanosine(37) in tRNA + S-adenosyl-L-methionine = N(1)-methylguanosine(37) in tRNA + S-adenosyl-L-homocysteine + H(+). Functionally, specifically methylates guanosine-37 in various tRNAs. In Rhodopseudomonas palustris (strain ATCC BAA-98 / CGA009), this protein is tRNA (guanine-N(1)-)-methyltransferase.